The sequence spans 782 residues: DnaJ homolog subfamily C member 16 (782 aa).

The N-terminal stretch at 1 to 25 (MEVRKLSISWQFLIVLVLILQILSA) is a signal peptide. Topologically, residues 26-535 (LDFDPYKVLG…DSIFHNNWRE (510 aa)) are cytoplasmic. The region spanning 29–93 (DPYKVLGVSR…EKRSNYDQYG (65 aa)) is the J domain. In terms of domain architecture, Thioredoxin spans 119-247 (FYFDESFFHF…LRQFVESLLP (129 aa)). Residues 536–556 (MMPLLSLIFSALFILFGTVIV) traverse the membrane as a helical; Anchor for type IV membrane protein segment. The Extracellular portion of the chain corresponds to 557-782 (QAFSDSSDER…FYIPSWPELD (226 aa)). Positions 562 to 593 (SSDERESSPPDKEEAQEKTGKTEPSFTKENSS) are disordered. The span at 563–582 (SDERESSPPDKEEAQEKTGK) shows a compositional bias: basic and acidic residues. The segment covering 583 to 593 (TEPSFTKENSS) has biased composition (polar residues). A glycan (N-linked (GlcNAc...) asparagine) is linked at N631.

It localises to the endoplasmic reticulum membrane. Functionally, plays an important role in regulating the size of autophagosomes during the formation process. This chain is DnaJ homolog subfamily C member 16 (DNAJC16), found in Pongo abelii (Sumatran orangutan).